We begin with the raw amino-acid sequence, 111 residues long: WAP four-disulfide core domain protein 12 (111 aa).

An N-terminal signal peptide occupies residues 1–23 (MGSSSFLVLTVSLALVTLVAAEG). Residues 27–74 (GIEKAGVCPADNVRCFKSDPPQCHTDQDCLGARKCCYLHCGFKCVIPV) form the WAP domain. Cystine bridges form between Cys34/Cys62, Cys41/Cys66, Cys49/Cys61, and Cys55/Cys70. Positions 80-111 (GGNKDEDVSGPCPEPGWEAKSPGSSSTGCPQK) are disordered. Residues 101–111 (PGSSSTGCPQK) show a composition bias toward polar residues.

The protein localises to the secreted. Functionally, antibacterial protein. Putative acid-stable proteinase inhibitor. The protein is WAP four-disulfide core domain protein 12 (WFDC12) of Papio anubis (Olive baboon).